Reading from the N-terminus, the 219-residue chain is Ribose-5-phosphate isomerase A (219 aa).

Substrate-binding positions include 28–31, 81–84, and 94–97; these read SGST, DGAD, and KGGG. Residue Glu-103 is the Proton acceptor of the active site. Substrate is bound at residue Lys-121.

It belongs to the ribose 5-phosphate isomerase family. Homodimer.

It catalyses the reaction aldehydo-D-ribose 5-phosphate = D-ribulose 5-phosphate. It participates in carbohydrate degradation; pentose phosphate pathway; D-ribose 5-phosphate from D-ribulose 5-phosphate (non-oxidative stage): step 1/1. Functionally, catalyzes the reversible conversion of ribose-5-phosphate to ribulose 5-phosphate. This chain is Ribose-5-phosphate isomerase A, found in Haemophilus influenzae (strain 86-028NP).